Reading from the N-terminus, the 40-residue chain is Large ribosomal subunit protein bL36 (40 aa).

It belongs to the bacterial ribosomal protein bL36 family.

This is Large ribosomal subunit protein bL36 from Corynebacterium aurimucosum (strain ATCC 700975 / DSM 44827 / CIP 107346 / CN-1) (Corynebacterium nigricans).